Reading from the N-terminus, the 635-residue chain is Phosphatidylserine decarboxylase proenzyme 3 (635 aa).

The interval 1–42 is disordered; that stretch reads MGNGNSTETKESRRSKMRKKIQNFRSRRRLSRPGSGSVSGLA. Gly-2 carries N-myristoyl glycine lipidation. Positions 15 to 31 are enriched in basic residues; the sequence is SKMRKKIQNFRSRRRLS. One can recognise a C2 domain in the interval 22 to 147; it reads QNFRSRRRLS…VVQEPDSTCK (126 aa). EF-hand domains are found at residues 180–210 and 211–246; these read AKRI…FGNV and VAAN…QQEQ. Ca(2+)-binding residues include Asp-188, Asp-190, Asp-192, Lys-194, Glu-199, Asp-224, Asn-226, Asp-228, and Glu-235. Residues Asp-442, His-498, and Ser-586 each act as charge relay system; for autoendoproteolytic cleavage activity in the active site. Ser-586 acts as the Schiff-base intermediate with substrate; via pyruvic acid; for decarboxylase activity in catalysis. At Ser-586 the chain carries Pyruvic acid (Ser); by autocatalysis.

The protein belongs to the phosphatidylserine decarboxylase family. PSD-B subfamily. Eukaryotic type II sub-subfamily. In terms of assembly, heterodimer of a large membrane-associated beta subunit and a small pyruvoyl-containing alpha subunit. Pyruvate serves as cofactor. In terms of processing, is synthesized initially as an inactive proenzyme. Formation of the active enzyme involves a self-maturation process in which the active site pyruvoyl group is generated from an internal serine residue via an autocatalytic post-translational modification. Two non-identical subunits are generated from the proenzyme in this reaction, and the pyruvate is formed at the N-terminus of the alpha chain, which is derived from the carboxyl end of the proenzyme. The autoendoproteolytic cleavage occurs by a canonical serine protease mechanism, in which the side chain hydroxyl group of the serine supplies its oxygen atom to form the C-terminus of the beta chain, while the remainder of the serine residue undergoes an oxidative deamination to produce ammonia and the pyruvoyl prosthetic group on the alpha chain. During this reaction, the Ser that is part of the protease active site of the proenzyme becomes the pyruvoyl prosthetic group, which constitutes an essential element of the active site of the mature decarboxylase. Expressed in roots, leaves, stems and flowers.

The protein resides in the endoplasmic reticulum membrane. It carries out the reaction a 1,2-diacyl-sn-glycero-3-phospho-L-serine + H(+) = a 1,2-diacyl-sn-glycero-3-phosphoethanolamine + CO2. Its pathway is phospholipid metabolism; phosphatidylethanolamine biosynthesis; phosphatidylethanolamine from CDP-diacylglycerol: step 2/2. Functionally, catalyzes the formation of phosphatidylethanolamine (PtdEtn) from phosphatidylserine (PtdSer). Plays a central role in phospholipid metabolism and in the interorganelle trafficking of phosphatidylserine. Contributes only to a minor proportion of PtdEtn production. This chain is Phosphatidylserine decarboxylase proenzyme 3 (PSD3), found in Arabidopsis thaliana (Mouse-ear cress).